A 309-amino-acid chain; its full sequence is Dicarboxylate carrier UCP2 (309 aa).

Over 1-16 the chain is Mitochondrial intermembrane; sequence MVGFKATDVPPTATVK. 3 Solcar repeats span residues 11–106, 114–203, and 212–297; these read PTAT…VKQF, AGIG…IKDT, and DDLP…LKRA. Positions 16 to 63 are important for interaction with long-chain fatty acids; that stretch reads KFLGAGTAACIADLITFPLDTAKVRLQIQGESQGLVRTAASAQYRGVL. The chain crosses the membrane as a helical span at residues 17-40; it reads FLGAGTAACIADLITFPLDTAKVR. Topologically, residues 41-77 are mitochondrial matrix; the sequence is LQIQGESQGLVRTAASAQYRGVLGTILTMVRTEGPRS. A helical transmembrane segment spans residues 78 to 103; sequence LYNGLVAGLQRQMSFASVRIGLYDSV. Over 104–119 the chain is Mitochondrial intermembrane; it reads KQFYTKGSEHAGIGSR. The chain crosses the membrane as a helical span at residues 120–145; that stretch reads LLAGSTTGALAVAVAQPTDVVKVRFQ. Topologically, residues 146–173 are mitochondrial matrix; that stretch reads AQARAGGGRRYQSTVEAYKTIAREEGIR. Residues 174 to 199 traverse the membrane as a helical segment; sequence GLWKGTSPNVARNAIVNCAELVTYDL. Residues 200 to 217 are Mitochondrial intermembrane-facing; sequence IKDTLLKANLMTDDLPCH. The helical transmembrane segment at 218–242 threads the bilayer; it reads FTSAFGAGFCTTVIASPVDVVKTRY. The Mitochondrial matrix segment spans residues 243–268; that stretch reads MNSALGQYHSAGHCALTMLRKEGPRA. A helical transmembrane segment spans residues 269–294; the sequence is FYKGFMPSFLRLGSWNVVMFVTYEQL. The important for interaction with long-chain fatty acids stretch occupies residues 278–285; sequence LRLGSWNV. Topologically, residues 295 to 309 are mitochondrial intermembrane; the sequence is KRALMAAYQSREAPF.

It belongs to the mitochondrial carrier (TC 2.A.29) family. In terms of assembly, homotetramer. Adopts an asymmetrical dimer of dimers functional form. Interacts with MICU1 (when methylated); leading to decrease the calcium sensitivity of MICU1. As to expression, widely expressed. Highest in spleen, lung, white and brown adipose tissues. 4-6 times higher levels are detected in white adipose tissue of ob/ob and db/db mice when compared to lean littermates. Expressed in neurons of the ventromedial nucleus of the hypothalamus (at protein level). Expressed in thymocytes (at protein level).

The protein resides in the mitochondrion inner membrane. It catalyses the reaction L-aspartate(out) + phosphate(in) + H(+)(in) = L-aspartate(in) + phosphate(out) + H(+)(out). It carries out the reaction oxaloacetate(out) + phosphate(in) + H(+)(in) = oxaloacetate(in) + phosphate(out) + H(+)(out). The catalysed reaction is (S)-malate(out) + phosphate(in) + H(+)(in) = (S)-malate(in) + phosphate(out) + H(+)(out). The enzyme catalyses malonate(out) + phosphate(in) + H(+)(in) = malonate(in) + phosphate(out) + H(+)(out). It catalyses the reaction sulfate(out) + phosphate(in) + H(+)(in) = sulfate(in) + phosphate(out) + H(+)(out). It carries out the reaction (S)-malate(out) = (S)-malate(in). The catalysed reaction is L-aspartate(out) = L-aspartate(in). The enzyme catalyses phosphate(in) = phosphate(out). It catalyses the reaction chloride(in) = chloride(out). It carries out the reaction H(+)(in) = H(+)(out). The catalysed reaction is a long-chain fatty acid(out) = a long-chain fatty acid(in). Proton conductance is activated by free long-chain fatty acids and allosterically inhibited by purine nucleotides. Could be constitutively inhibited by GDP. Its function is as follows. Antiporter that exports dicarboxylate intermediates of the Krebs cycle in exchange for phosphate plus a proton across the inner membrane of mitochondria, a process driven by mitochondrial motive force with an overall impact on glycolysis, glutaminolysis and glutathione-dependent redox balance. Continuous export of oxaloacetate and related four-carbon dicarboxylates from mitochondrial matrix into the cytosol negatively regulates the oxidation of acetyl-CoA substrates via the Krebs cycle lowering the ATP/ADP ratio and reactive oxygen species (ROS) production. May mediate inducible proton entry into the mitochondrial matrix affecting ATP turnover as a protection mechanism against oxidative stress. The proton currents are most likely associated with fatty acid flipping across the inner membrane of mitochondria in a metabolic process regulated by free fatty acids and purine nucleotides. Regulates the use of glucose as a source of energy. Required for glucose-induced DRP1-dependent mitochondrial fission and neuron activation in the ventromedial nucleus of the hypothalamus (VMH). This mitochondrial adaptation mechanism modulates the VMH pool of glucose-excited neurons with an impact on systemic glucose homeostasis. Regulates ROS levels and metabolic reprogramming of macrophages during the resolution phase of inflammation. Attenuates ROS production in response to IL33 to preserve the integrity of the Krebs cycle required for persistent production of itaconate and subsequent GATA3-dependent differentiation of inflammation-resolving alternatively activated macrophages. Can unidirectionally transport anions including L-malate, L-aspartate, phosphate and chloride ions. Does not mediate adaptive thermogenesis. The polypeptide is Dicarboxylate carrier UCP2 (Ucp2) (Mus musculus (Mouse)).